The chain runs to 535 residues: T-complex protein 1 subunit beta (535 aa).

Residue methionine 1 is modified to N-acetylmethionine. The residue at position 2 (alanine 2) is an N-acetylalanine. At serine 3 the chain carries Phosphoserine. Lysine 13 carries the post-translational modification N6-acetyllysine. Glycine 44 is an ADP binding site. Glycine 44 is a binding site for ATP. Phosphoserine is present on serine 60. A Mg(2+)-binding site is contributed by aspartate 97. ADP contacts are provided by glycine 98, threonine 99, threonine 100, and serine 101. ATP-binding residues include glycine 98, threonine 99, and threonine 100. Residue lysine 154 is modified to N6-acetyllysine. Residues serine 168 and serine 169 each coordinate ADP. Lysine 181 carries the N6-acetyllysine modification. Residue lysine 248 forms a Glycyl lysine isopeptide (Lys-Gly) (interchain with G-Cter in SUMO2) linkage. The residue at position 260 (serine 260) is a Phosphoserine. Phosphothreonine is present on threonine 261. ADP contacts are provided by glycine 410, glutamate 495, and lysine 500. ATP is bound by residues glutamate 495 and lysine 500.

Belongs to the TCP-1 chaperonin family. Component of the chaperonin-containing T-complex (TRiC), a hexadecamer composed of two identical back-to-back stacked rings enclosing a protein folding chamber. Each ring is made up of eight different subunits: TCP1/CCT1, CCT2, CCT3, CCT4, CCT5, CCT6A/CCT6, CCT7, CCT8. Interacts with PACRG. Interacts with FLCN. Interacts with DLEC1. Interacts with SVEP1.

The protein resides in the cytoplasm. The catalysed reaction is ATP + H2O = ADP + phosphate + H(+). In terms of biological role, component of the chaperonin-containing T-complex (TRiC), a molecular chaperone complex that assists the folding of actin, tubulin and other proteins upon ATP hydrolysis. The TRiC complex mediates the folding of WRAP53/TCAB1, thereby regulating telomere maintenance. As part of the TRiC complex may play a role in the assembly of BBSome, a complex involved in ciliogenesis regulating transports vesicles to the cilia. This Homo sapiens (Human) protein is T-complex protein 1 subunit beta.